A 301-amino-acid polypeptide reads, in one-letter code: Ribonuclease Z (301 aa).

Positions 63, 65, 67, 68, 141, 204, and 262 each coordinate Zn(2+). Residue D67 is the Proton acceptor of the active site.

The protein belongs to the RNase Z family. Homodimer. Requires Zn(2+) as cofactor.

The enzyme catalyses Endonucleolytic cleavage of RNA, removing extra 3' nucleotides from tRNA precursor, generating 3' termini of tRNAs. A 3'-hydroxy group is left at the tRNA terminus and a 5'-phosphoryl group is left at the trailer molecule.. Its function is as follows. Zinc phosphodiesterase, which displays some tRNA 3'-processing endonuclease activity. Probably involved in tRNA maturation, by removing a 3'-trailer from precursor tRNA. This Streptomyces avermitilis (strain ATCC 31267 / DSM 46492 / JCM 5070 / NBRC 14893 / NCIMB 12804 / NRRL 8165 / MA-4680) protein is Ribonuclease Z.